A 267-amino-acid chain; its full sequence is Glutamate racemase (267 aa).

Residues 10–11 (DS) and 42–43 (YG) contribute to the substrate site. The active-site Proton donor/acceptor is Cys-73. 74–75 (NT) is a substrate binding site. Catalysis depends on Cys-183, which acts as the Proton donor/acceptor. 184 to 185 (TH) is a substrate binding site.

This sequence belongs to the aspartate/glutamate racemases family.

It catalyses the reaction L-glutamate = D-glutamate. Its pathway is cell wall biogenesis; peptidoglycan biosynthesis. Its function is as follows. Provides the (R)-glutamate required for cell wall biosynthesis. The polypeptide is Glutamate racemase (Lactobacillus acidophilus (strain ATCC 700396 / NCK56 / N2 / NCFM)).